A 211-amino-acid polypeptide reads, in one-letter code: Claudin-7 (211 aa).

The Cytoplasmic segment spans residues 1-7 (MANSGLQ). A helical membrane pass occupies residues 8–28 (LLGFSMAMLGWVGLIASTAIP). At 29–81 (QWQMSSYAGDNIITAQAMYKGLWMECVTQSTGMMSCKMYDSVLALPAATQATR) the chain is on the extracellular side. The chain crosses the membrane as a helical span at residues 82–102 (ALMIVSLVLGFLAMFVATMGM). Topologically, residues 103–119 (KCTRCGGDDKVKKARIA) are cytoplasmic. The chain crosses the membrane as a helical span at residues 120-140 (MTGGIIFIVAGLAALVACSWI). Topologically, residues 141–160 (GHQIVTDFYNPLTPMNIKYE) are extracellular. The chain crosses the membrane as a helical span at residues 161–181 (FGPAIFIGWAGSALVLLGGAL). Topologically, residues 182–211 (LSCSCPGSESKAAYRAPRSYPKSNSSKEYV) are cytoplasmic. The segment at 210 to 211 (YV) is interactions with TJP1, TJP2 and TJP3.

It belongs to the claudin family. As to quaternary structure, directly interacts with TJP1/ZO-1, TJP2/ZO-2 and TJP3/ZO-3. The phosphorylated form interacts with EPCAM. Post-translationally, phosphorylated.

It localises to the cell membrane. The protein localises to the basolateral cell membrane. It is found in the cell junction. Its subcellular location is the tight junction. Plays a major role in tight junction-specific obliteration of the intercellular space. In Rattus norvegicus (Rat), this protein is Claudin-7 (Cldn7).